A 274-amino-acid polypeptide reads, in one-letter code: Formamidopyrimidine-DNA glycosylase (274 aa).

Catalysis depends on P2, which acts as the Schiff-base intermediate with DNA. E3 serves as the catalytic Proton donor. Catalysis depends on K58, which acts as the Proton donor; for beta-elimination activity. H91, R110, and K152 together coordinate DNA. The FPG-type zinc-finger motif lies at 237-271; it reads KVYGRKNLPCLVCENKIETVVIAGRHSAFCPHCQP. The active-site Proton donor; for delta-elimination activity is R261.

This sequence belongs to the FPG family. In terms of assembly, monomer. The cofactor is Zn(2+).

It catalyses the reaction Hydrolysis of DNA containing ring-opened 7-methylguanine residues, releasing 2,6-diamino-4-hydroxy-5-(N-methyl)formamidopyrimidine.. It carries out the reaction 2'-deoxyribonucleotide-(2'-deoxyribose 5'-phosphate)-2'-deoxyribonucleotide-DNA = a 3'-end 2'-deoxyribonucleotide-(2,3-dehydro-2,3-deoxyribose 5'-phosphate)-DNA + a 5'-end 5'-phospho-2'-deoxyribonucleoside-DNA + H(+). Functionally, involved in base excision repair of DNA damaged by oxidation or by mutagenic agents. Acts as a DNA glycosylase that recognizes and removes damaged bases. Has a preference for oxidized purines, such as 7,8-dihydro-8-oxoguanine (8-oxoG). Has AP (apurinic/apyrimidinic) lyase activity and introduces nicks in the DNA strand. Cleaves the DNA backbone by beta-delta elimination to generate a single-strand break at the site of the removed base with both 3'- and 5'-phosphates. This is Formamidopyrimidine-DNA glycosylase from Legionella pneumophila (strain Paris).